The following is a 414-amino-acid chain: Esterase FrsA (414 aa).

Belongs to the FrsA family.

The enzyme catalyses a carboxylic ester + H2O = an alcohol + a carboxylate + H(+). In terms of biological role, catalyzes the hydrolysis of esters. The protein is Esterase FrsA of Escherichia coli O7:K1 (strain IAI39 / ExPEC).